A 195-amino-acid polypeptide reads, in one-letter code: Myelin-associated neurite-outgrowth inhibitor (195 aa).

Met-1 is modified (N-acetylmethionine). The Cytoplasmic segment spans residues 1–18; the sequence is MNPVYSPGSSGVPYANAK. Ser-6 is subject to Phosphoserine. The chain crosses the membrane as a helical span at residues 19–42; sequence GIGYPAGFPMGYAAAAPAYSPNMY. At 43 to 142 the chain is on the extracellular side; sequence PGANPTFQTG…PAPIPPPRGN (100 aa). Asn-46 carries an N-linked (GlcNAc...) asparagine glycan. A helical membrane pass occupies residues 143 to 164; that stretch reads GVTMGMVAGTTMAMSAGTLLTA. At 165–195 the chain is on the cytoplasmic side; the sequence is HSPTPVAPHPVTVPTYRAPGTPTYSYVPPQW.

Belongs to the FAM168 family. In terms of assembly, may form homodimers. May interact with DAZAP2, FAM168A, PRDX6, RBM6, TMTC1 and YPEL2. Interacts with CDC27. N-glycosylated. As to expression, expressed in the brain, within neuronal axonal fibers and associated with myelin sheets (at protein level). Expression tends to be lower in the brain of Alzheimer disease patients compared to healthy individuals (at protein level).

The protein localises to the cytoplasm. The protein resides in the perinuclear region. It localises to the cell membrane. Its subcellular location is the cell projection. It is found in the axon. Its function is as follows. Inhibitor of neuronal axonal outgrowth. Acts as a negative regulator of CDC42 and STAT3 and a positive regulator of STMN2. Positive regulator of CDC27. The polypeptide is Myelin-associated neurite-outgrowth inhibitor (FAM168B) (Homo sapiens (Human)).